A 316-amino-acid polypeptide reads, in one-letter code: Thymidylate synthase (316 aa).

DUMP-binding positions include arginine 23 and 178 to 179; that span reads RR. The active-site Nucleophile is the cysteine 198. DUMP is bound by residues 218–221, asparagine 229, and 259–261; these read RSAD and HIY. Position 221 (aspartate 221) interacts with (6R)-5,10-methylene-5,6,7,8-tetrahydrofolate. Position 315 (alanine 315) interacts with (6R)-5,10-methylene-5,6,7,8-tetrahydrofolate.

It belongs to the thymidylate synthase family. Bacterial-type ThyA subfamily. As to quaternary structure, homodimer.

The protein resides in the cytoplasm. The enzyme catalyses dUMP + (6R)-5,10-methylene-5,6,7,8-tetrahydrofolate = 7,8-dihydrofolate + dTMP. It functions in the pathway pyrimidine metabolism; dTTP biosynthesis. Its function is as follows. Catalyzes the reductive methylation of 2'-deoxyuridine-5'-monophosphate (dUMP) to 2'-deoxythymidine-5'-monophosphate (dTMP) while utilizing 5,10-methylenetetrahydrofolate (mTHF) as the methyl donor and reductant in the reaction, yielding dihydrofolate (DHF) as a by-product. This enzymatic reaction provides an intracellular de novo source of dTMP, an essential precursor for DNA biosynthesis. The polypeptide is Thymidylate synthase (Levilactobacillus brevis (strain ATCC 367 / BCRC 12310 / CIP 105137 / JCM 1170 / LMG 11437 / NCIMB 947 / NCTC 947) (Lactobacillus brevis)).